Reading from the N-terminus, the 502-residue chain is MPIWKTQTFFTSISVIQIVNKETKVSTKKEKDSMLNQLNTILRFLFLFLQLIKSSAAVEPNGGPNILDHNIMLVNTNATIPKKEQTDFEVISPTKQTQVDEDCKKGLYHIENAGNLIELQAKCWKVVGNIEISSNYSGSLIDLGLIREIEGDLIIKNNKHIFRIQGYNLESLGKLELDSLTSFVSLDFPALKEVETVDWRVLPILSSVVINGNIKKIKNIIISDTALTSIDYFNNVKKVDIFNINNNRFLENLFASLESVTKQLTVHSNAKELELDLSNLHTVENMTIKDVSEIKLAKLSSVNSSLEFIENQFSSLELPLLAKVQGTLGLIDNKNLKKLNFSNATDIQGGLMIANNTELAKIDFFPKLRQIGGAIYFEGSFDKIDLPELKLVKGSAYIKSSSEELNCEEFTSPKAGRSIIRGGKIECTSGMKSKMLNVDEEGNVLGKQETDNDNGKKEKGKNGAKSQGSSKKMENSAPKNIFIDAFKMSVYAVFTVLFSIIF.

The signal sequence occupies residues 1-56 (MPIWKTQTFFTSISVIQIVNKETKVSTKKEKDSMLNQLNTILRFLFLFLQLIKSSA). Residues Asn-77, Asn-135, Asn-285, Asn-303, Asn-340, Asn-343, and Asn-355 are each glycosylated (N-linked (GlcNAc...) asparagine). A disordered region spans residues 441-474 (EGNVLGKQETDNDNGKKEKGKNGAKSQGSSKKME). Residues 448 to 461 (QETDNDNGKKEKGK) are compositionally biased toward basic and acidic residues. Residue Asn-475 is the site of GPI-anchor amidated asparagine attachment. A propeptide spans 476-502 (SAPKNIFIDAFKMSVYAVFTVLFSIIF) (removed in mature form).

Belongs to the SPS2 family.

The protein localises to the cell membrane. In terms of biological role, involved in middle stages of meiosis. Redundant with SPS22 for the organization of the beta-glucan layer of the spore wall. The sequence is that of Sporulation-specific protein 2 (SPS2) from Saccharomyces cerevisiae (strain ATCC 204508 / S288c) (Baker's yeast).